We begin with the raw amino-acid sequence, 352 residues long: tRNA pseudouridine synthase D (352 aa).

The Nucleophile role is filled by Asp78. One can recognise a TRUD domain in the interval 153–299 (GVPNYYGEQR…LDQDRRPLLL (147 aa)).

The protein belongs to the pseudouridine synthase TruD family.

It carries out the reaction uridine(13) in tRNA = pseudouridine(13) in tRNA. Responsible for synthesis of pseudouridine from uracil-13 in transfer RNAs. The chain is tRNA pseudouridine synthase D from Aeromonas hydrophila subsp. hydrophila (strain ATCC 7966 / DSM 30187 / BCRC 13018 / CCUG 14551 / JCM 1027 / KCTC 2358 / NCIMB 9240 / NCTC 8049).